Consider the following 315-residue polypeptide: Lipoyl synthase (315 aa).

C63, C68, C74, C89, C93, C96, and S303 together coordinate [4Fe-4S] cluster. In terms of domain architecture, Radical SAM core spans 75–292 (FSKGTATFMI…EEKAYEMGFV (218 aa)).

The protein belongs to the radical SAM superfamily. Lipoyl synthase family. [4Fe-4S] cluster is required as a cofactor.

It is found in the cytoplasm. The catalysed reaction is [[Fe-S] cluster scaffold protein carrying a second [4Fe-4S](2+) cluster] + N(6)-octanoyl-L-lysyl-[protein] + 2 oxidized [2Fe-2S]-[ferredoxin] + 2 S-adenosyl-L-methionine + 4 H(+) = [[Fe-S] cluster scaffold protein] + N(6)-[(R)-dihydrolipoyl]-L-lysyl-[protein] + 4 Fe(3+) + 2 hydrogen sulfide + 2 5'-deoxyadenosine + 2 L-methionine + 2 reduced [2Fe-2S]-[ferredoxin]. Its pathway is protein modification; protein lipoylation via endogenous pathway; protein N(6)-(lipoyl)lysine from octanoyl-[acyl-carrier-protein]: step 2/2. Functionally, catalyzes the radical-mediated insertion of two sulfur atoms into the C-6 and C-8 positions of the octanoyl moiety bound to the lipoyl domains of lipoate-dependent enzymes, thereby converting the octanoylated domains into lipoylated derivatives. This chain is Lipoyl synthase, found in Chromobacterium violaceum (strain ATCC 12472 / DSM 30191 / JCM 1249 / CCUG 213 / NBRC 12614 / NCIMB 9131 / NCTC 9757 / MK).